The primary structure comprises 734 residues: Photosystem I P700 chlorophyll a apoprotein A2 (734 aa).

8 consecutive transmembrane segments (helical) span residues 46–69 (IFAS…FHVA), 135–158 (LYTG…LHLQ), 175–199 (LNHH…HVAI), 273–291 (IAHH…GHMY), 330–353 (IHFQ…QHMY), 369–395 (AALY…IFFI), 417–439 (AIIS…LYVH), and 517–535 (FLVH…LILV). Residues cysteine 559 and cysteine 568 each coordinate [4Fe-4S] cluster. Helical transmembrane passes span 575–596 (AFYL…YWHW) and 643–665 (LSVW…MFLI). Chlorophyll a is bound by residues histidine 654, methionine 662, and tyrosine 670. Tryptophan 671 contacts phylloquinone. The helical transmembrane segment at 707 to 727 (LVGLAHFSVGYIFTYAAFLIA) threads the bilayer.

This sequence belongs to the PsaA/PsaB family. As to quaternary structure, the PsaA/B heterodimer binds the P700 chlorophyll special pair and subsequent electron acceptors. PSI consists of a core antenna complex that captures photons, and an electron transfer chain that converts photonic excitation into a charge separation. The eukaryotic PSI reaction center is composed of at least 11 subunits. Requires P700 is a chlorophyll a/chlorophyll a' dimer, A0 is one or more chlorophyll a, A1 is one or both phylloquinones and FX is a shared 4Fe-4S iron-sulfur center. as cofactor.

It localises to the plastid. The protein resides in the chloroplast thylakoid membrane. It catalyses the reaction reduced [plastocyanin] + hnu + oxidized [2Fe-2S]-[ferredoxin] = oxidized [plastocyanin] + reduced [2Fe-2S]-[ferredoxin]. In terms of biological role, psaA and PsaB bind P700, the primary electron donor of photosystem I (PSI), as well as the electron acceptors A0, A1 and FX. PSI is a plastocyanin-ferredoxin oxidoreductase, converting photonic excitation into a charge separation, which transfers an electron from the donor P700 chlorophyll pair to the spectroscopically characterized acceptors A0, A1, FX, FA and FB in turn. Oxidized P700 is reduced on the lumenal side of the thylakoid membrane by plastocyanin. The sequence is that of Photosystem I P700 chlorophyll a apoprotein A2 from Aethionema cordifolium (Lebanon stonecress).